Here is a 677-residue protein sequence, read N- to C-terminus: NADPH--cytochrome P450 reductase (677 aa).

At G2 the chain carries N-acetylglycine. The Lumenal portion of the chain corresponds to 2–21 (GDSHVDTSSTVSEAVAEEVS). A helical membrane pass occupies residues 22–42 (LFSMTDMILFSLIVGLLTYWF). Residues 43–677 (LFRKKKEEVP…KGRYSLDVWS (635 aa)) lie on the Cytoplasmic side of the membrane. At S63 the chain carries Phosphoserine. The Flavodoxin-like domain occupies 80–224 (IIVFYGSQTG…DFITWREQFW (145 aa)). FMN is bound by residues 86–91 (SQTGTA), 138–141 (ATYG), 173–182 (LGNKTYEHFN), and D208. Positions 279–521 (KNPFLAAVTT…FVRKSQFRLP (243 aa)) constitute an FAD-binding FR-type domain. R298 is a binding site for NADP(+). FAD contacts are provided by residues R424, 454–457 (RYYS), 472–474 (CAV), Y478, and 488–491 (GVAT). NADP(+) is bound by residues T535, 596–597 (SR), 602–606 (KVYVQ), and D638. W676 is an FAD binding site.

This sequence belongs to the NADPH--cytochrome P450 reductase family. In the N-terminal section; belongs to the flavodoxin family. It in the C-terminal section; belongs to the flavoprotein pyridine nucleotide cytochrome reductase family. FAD serves as cofactor. FMN is required as a cofactor.

It localises to the endoplasmic reticulum membrane. The catalysed reaction is 2 oxidized [cytochrome P450] + NADPH = 2 reduced [cytochrome P450] + NADP(+) + H(+). In terms of biological role, this enzyme is required for electron transfer from NADP to cytochrome P450 in microsomes. It can also provide electron transfer to heme oxygenase and cytochrome B5. This is NADPH--cytochrome P450 reductase from Homo sapiens (Human).